A 197-amino-acid polypeptide reads, in one-letter code: MFEYPQGYKLIAGVDEVGRGPLVGAVVTAAVILDPHNPIEGLADSKKLSEKKRLALADEIKEKALAWALGRAEADEIDEINILQASLLAMTRAVKSLKIQPHFVLVDGNKIPKDLDIPAQAVVKGDSIVAEISAASILAKVARDQEMEELDKQYPEYAFAKHKGYPTKLHLEKLAELGALPQHRRSFAPVKKALEQF.

Residues 9–197 (KLIAGVDEVG…APVKKALEQF (189 aa)) enclose the RNase H type-2 domain. The a divalent metal cation site is built by Asp15, Glu16, and Asp107.

This sequence belongs to the RNase HII family. Requires Mn(2+) as cofactor. Mg(2+) is required as a cofactor.

The protein localises to the cytoplasm. It carries out the reaction Endonucleolytic cleavage to 5'-phosphomonoester.. Its function is as follows. Endonuclease that specifically degrades the RNA of RNA-DNA hybrids. The protein is Ribonuclease HII of Haemophilus influenzae (strain PittEE).